The chain runs to 984 residues: Translation initiation factor IF-2 (984 aa).

Positions 32–402 (PAKNATSTLT…TQPQRAAKRK (371 aa)) are disordered. Over residues 89–123 (PAETEAQASPAQPEAKAAAPAAEAEEAPAAKPAPA) the composition is skewed to low complexity. Positions 126 to 136 (RKAEARTEAPR) are enriched in basic and acidic residues. 2 stretches are compositionally biased toward low complexity: residues 154 to 172 (APET…SAAP) and 187 to 197 (AETTESAPAEP). The segment covering 198–220 (AAEKAPAEKRRYEVSMEPEKDSV) has biased composition (basic and acidic residues). Over residues 255–270 (RPDPAAVQAQAAAAAQ) the composition is skewed to low complexity. Residues 271–283 (AREERAERPDRGP) show a composition bias toward basic and acidic residues. Low complexity predominate over residues 308–334 (GRPAPRSGAPRPGGARPAAGFGQPAQA). Residues 482 to 651 (PRPPVVTIMG…ALQAEVLELK (170 aa)) form the tr-type G domain. Positions 491–498 (GHVDHGKT) are G1. 491-498 (GHVDHGKT) provides a ligand contact to GTP. A G2 region spans residues 516–520 (GITQH). The interval 537-540 (DTPG) is G3. GTP is bound by residues 537–541 (DTPGH) and 591–594 (NKID). The tract at residues 591–594 (NKID) is G4. Residues 627-629 (SAK) form a G5 region.

Belongs to the TRAFAC class translation factor GTPase superfamily. Classic translation factor GTPase family. IF-2 subfamily.

The protein localises to the cytoplasm. In terms of biological role, one of the essential components for the initiation of protein synthesis. Protects formylmethionyl-tRNA from spontaneous hydrolysis and promotes its binding to the 30S ribosomal subunits. Also involved in the hydrolysis of GTP during the formation of the 70S ribosomal complex. In Oleidesulfovibrio alaskensis (strain ATCC BAA-1058 / DSM 17464 / G20) (Desulfovibrio alaskensis), this protein is Translation initiation factor IF-2.